The following is a 77-amino-acid chain: Sec-independent protein translocase protein TatA (77 aa).

A helical membrane pass occupies residues Met-1–Gly-21. Residues Gly-42–Glu-60 show a composition bias toward basic and acidic residues. Residues Gly-42 to Val-77 are disordered.

It belongs to the TatA/E family. The Tat system comprises two distinct complexes: a TatABC complex, containing multiple copies of TatA, TatB and TatC subunits, and a separate TatA complex, containing only TatA subunits. Substrates initially bind to the TatABC complex, which probably triggers association of the separate TatA complex to form the active translocon.

It is found in the cell inner membrane. Functionally, part of the twin-arginine translocation (Tat) system that transports large folded proteins containing a characteristic twin-arginine motif in their signal peptide across membranes. TatA could form the protein-conducting channel of the Tat system. This is Sec-independent protein translocase protein TatA from Bradyrhizobium diazoefficiens (strain JCM 10833 / BCRC 13528 / IAM 13628 / NBRC 14792 / USDA 110).